The sequence spans 519 residues: C-glycoside 3-oxidase (519 aa).

E41 contributes to the FAD binding site. A disordered region spans residues 43–93 (GPTVSNPPGAHVKNIEDPERRSHAQRASEGPGAGAETVNSPGAVKSGERRA). The segment covering 55–64 (KNIEDPERRS) has biased composition (basic and acidic residues). Residues S118, N120, M124, T129, A131, and V234 each contribute to the FAD site. The Proton acceptor role is filled by H440. FAD-binding residues include N474 and T486.

This sequence belongs to the GMC oxidoreductase family. As to quaternary structure, monomer. The cofactor is FAD.

The enzyme catalyses isovitexin + O2 = 3''-dehydroisovitexin + H2O2. It carries out the reaction isoorientin + O2 = 3''-dehydroisoorientin + H2O2. The catalysed reaction is mangiferin + O2 = 3'-dehydromangiferin + H2O2. In terms of biological role, FAD-dependent C-glycoside-metabolizing enzyme that participates in the degradation of certain C-glycosides by catalyzing the oxidation of the hydroxyl group at the C3 position of the sugar moiety. Shows oxidase activity toward various C-glycosides such as isovitexin, isoorientin and mangiferin but cannot use carminic acid, puerarin, orientin or aloesin. Shows weak activity (100 to 1000-fold lower) with O-glycosides. Probably plays a crucial role in the metabolism of C-glycosides in nature. The protein is C-glycoside 3-oxidase of Arthrobacter globiformis (strain ATCC 8010 / DSM 20124 / JCM 1332 / NBRC 12137 / NCIMB 8907 / NRRL B-2979 / 168).